The chain runs to 642 residues: MQSDINKNHLTMTEGLTYINESGLKEEESKNIVGYNINGSIIDLFTPLPTITKEVIPITIDSEDGLEMLRHSAAHILAAAVKNLFPTVKISIGPSIENGFYYDFDAERPFTPEDFPAIEAEMQRIINESIPFERIEISKAEALEFFSSLHENYKVEIINSLEDGNITLYRIGNFTDLCKGPHVPNTNFIKAFKLLSVAGAYWRGNENNQMLSRIYATAFPNKKLLKTYLTQLEEAKRRDHRKLGKELNLFEFHEDIAPGMVFWQPNGMLLRTILEDFLRKEHLKRGYQLVQGPQLLRRELWEKSGHYTNYKENMYFTEIEEDVYGIKPMNCVSHMLLYKTHLHSYRELPQRYFELGVVHRHEKSGVLHGLLRVRQFTQDDAHIICMPEQLEEEIIQVITFVRDLMSLFDFNYHIVISTRPEKSIGSDYAWELATSALIQAVEKINLPYSINHGDGAFYGPKIDIKVTDAIGREWQLSTIQCDFTLPERFELEYVGQDGKRHQPVMIHRAIFGSIERFIGILTEHYAGAFPTWLTPIQVKILTVTDAQTPFAKHVYSQLQDVGIRVGLDIRNEKLGFKIREAQLAKIPYILVIGQKELELESVNVRLRTGENIGMQSVTEFIKLVENDCIQPFKRGGMNYRFS.

A catalytic region spans residues 239–530; that stretch reads DHRKLGKELN…LTEHYAGAFP (292 aa). Cys-331, His-382, and His-507 together coordinate Zn(2+).

The protein belongs to the class-II aminoacyl-tRNA synthetase family. As to quaternary structure, homodimer. The cofactor is Zn(2+).

It is found in the cytoplasm. The catalysed reaction is tRNA(Thr) + L-threonine + ATP = L-threonyl-tRNA(Thr) + AMP + diphosphate + H(+). Its function is as follows. Catalyzes the attachment of threonine to tRNA(Thr) in a two-step reaction: L-threonine is first activated by ATP to form Thr-AMP and then transferred to the acceptor end of tRNA(Thr). Also edits incorrectly charged L-seryl-tRNA(Thr). This Lawsonia intracellularis (strain PHE/MN1-00) protein is Threonine--tRNA ligase.